A 377-amino-acid polypeptide reads, in one-letter code: Pulmonary surfactant-associated protein B (377 aa).

Positions 1 to 22 (MAKSHLLQWLLLLPTLCCPGAA) are cleaved as a signal peptide. Positions 23 to 191 (ITSASSLECA…PHTQDFSEQQ (169 aa)) are excised as a propeptide. Residues 24–64 (TSASSLECAQGPQFWCQSLEHAVQCRALGHCLQEVWGHAGA) form the Saposin A-type domain. 3 Saposin B-type domains span residues 64-146 (ANDL…PRGQ), 195-272 (PLPF…STED), and 291-366 (QDTE…EAPA). 9 disulfide bridges follow: Cys68-Cys142, Cys71-Cys136, Cys99-Cys111, Cys199-Cys268, Cys202-Cys262, Cys226-Cys237, Cys295-Cys362, Cys298-Cys356, and Cys321-Cys331. A propeptide spanning residues 271-377 (EDAMGPALPA…PLQCFQTPHL (107 aa)) is cleaved from the precursor. Asn307 is a glycosylation site (N-linked (GlcNAc...) asparagine).

In terms of assembly, homodimer; disulfide-linked.

The protein localises to the secreted. Its subcellular location is the extracellular space. It localises to the surface film. Functionally, pulmonary surfactant-associated proteins promote alveolar stability by lowering the surface tension at the air-liquid interface in the peripheral air spaces. SP-B increases the collapse pressure of palmitic acid to nearly 70 millinewtons per meter. The chain is Pulmonary surfactant-associated protein B (Sftpb) from Mus musculus (Mouse).